A 534-amino-acid chain; its full sequence is Glycerol kinase 5 (534 aa).

ATP-binding residues include Ser-33 and Thr-34. 3 residues coordinate glycerol: Arg-103, Asp-280, and Gln-281. Positions 302, 345, and 445 each coordinate ATP.

Belongs to the FGGY kinase family. In terms of tissue distribution, expressed predominantly in sebaceous glands.

It is found in the cytoplasm. The catalysed reaction is glycerol + ATP = sn-glycerol 3-phosphate + ADP + H(+). It participates in polyol metabolism; glycerol degradation via glycerol kinase pathway; sn-glycerol 3-phosphate from glycerol: step 1/1. Skin-specific kinase that plays a key role in glycerol metabolism, catalyzing its phosphorylation to produce sn-glycerol 3-phosphate. Involved in skin-specific regulation of sterol regulatory element-binding protein (SREBP) processing and lipid biosynthesis. The polypeptide is Glycerol kinase 5 (Gk5) (Mus musculus (Mouse)).